The primary structure comprises 300 residues: MKIYILGAGAIGSLFGGLLANAGEDVLLIGRDPHVSAINEKGLKIVGIKDLNVKVEATTRVPEEKPDLIVLATKSYSTIEALKSARHIVKGSWVLSIQNGIGNEDKIIEFGGKAIGGITTNGAMVEAPGVIKWTGKGVTIIGLYPQGKEKFIEKVADVFNSADIETHVSENIISWIWAKAIVNSAINPIGTLLEVKNKVIRENDFLLSMAMEVVKEGCRVALQNGIEFDVPPMDLFFQTLEQTRENYNSMLQDIWRGKKTEVDYINGKIVEYAKAVNLEAPMNLLLWGLIKGKEALEGKK.

NADP(+) is bound by residues 7-12 (GAGAIG), K74, N99, and A123. K179 acts as the Proton donor in catalysis. Substrate-binding positions include K179, N183, N187, N197, and 246–249 (NYNS). E261 is a binding site for NADP(+).

It belongs to the ketopantoate reductase family.

The protein resides in the cytoplasm. The catalysed reaction is (R)-pantoate + NAD(+) = 2-dehydropantoate + NADH + H(+). It carries out the reaction (R)-pantoate + NADP(+) = 2-dehydropantoate + NADPH + H(+). The protein operates within cofactor biosynthesis; coenzyme A biosynthesis. Functionally, catalyzes the NAD(P)H-dependent reduction of ketopantoate into pantoic acid. This is 2-dehydropantoate 2-reductase (apbA) from Pyrococcus abyssi (strain GE5 / Orsay).